Consider the following 254-residue polypeptide: Type III pantothenate kinase (254 aa).

Aspartate 6–threonine 13 is a binding site for ATP. Residues tyrosine 100 and glycine 107–arginine 110 contribute to the substrate site. Residue aspartate 109 is the Proton acceptor of the active site. Residue aspartate 129 participates in K(+) binding. Threonine 132 contributes to the ATP binding site. Residue threonine 184 participates in substrate binding.

The protein belongs to the type III pantothenate kinase family. Homodimer. NH4(+) is required as a cofactor. The cofactor is K(+).

It is found in the cytoplasm. It carries out the reaction (R)-pantothenate + ATP = (R)-4'-phosphopantothenate + ADP + H(+). The protein operates within cofactor biosynthesis; coenzyme A biosynthesis; CoA from (R)-pantothenate: step 1/5. Functionally, catalyzes the phosphorylation of pantothenate (Pan), the first step in CoA biosynthesis. This is Type III pantothenate kinase from Anaeromyxobacter dehalogenans (strain 2CP-C).